A 95-amino-acid polypeptide reads, in one-letter code: Large ribosomal subunit protein uL23 (95 aa).

The protein belongs to the universal ribosomal protein uL23 family. As to quaternary structure, part of the 50S ribosomal subunit. Contacts protein L29, and trigger factor when it is bound to the ribosome.

In terms of biological role, one of the early assembly proteins it binds 23S rRNA. One of the proteins that surrounds the polypeptide exit tunnel on the outside of the ribosome. Forms the main docking site for trigger factor binding to the ribosome. In Desulforudis audaxviator (strain MP104C), this protein is Large ribosomal subunit protein uL23.